A 418-amino-acid polypeptide reads, in one-letter code: Flavin-dependent L-tryptophan oxidase VioA (418 aa).

Position 13 (G13) interacts with Mg(2+). FAD is bound at residue S15. G16 serves as a coordination point for Mg(2+). Positions 38, 46, and 64 each coordinate FAD. Residues R64 and H163 each contribute to the substrate site. An FAD-binding site is contributed by L208. A240 lines the Mg(2+) pocket. Y309 lines the substrate pocket. Position 398 (M398) interacts with FAD.

This sequence belongs to the flavin monoamine oxidase family. As to quaternary structure, homodimer. FAD serves as cofactor. Mg(2+) is required as a cofactor.

The catalysed reaction is L-tryptophan + O2 = 2-iminio-3-(indol-3-yl)propanoate + H2O2. It carries out the reaction 7-chloro-L-tryptophan + O2 = 3-(7-chloroindol-3-yl)-2-iminopropanoate + H2O2. Its pathway is pigment biosynthesis; violacein biosynthesis. Its function is as follows. The enzyme generates the imine form of indole 3-pyruvate (IPA) from L-tryptophan (L-Trp), with concomitant two-electron reduction of O(2) to H(2)O(2). This is Flavin-dependent L-tryptophan oxidase VioA (vioA) from Chromobacterium violaceum (strain ATCC 12472 / DSM 30191 / JCM 1249 / CCUG 213 / NBRC 12614 / NCIMB 9131 / NCTC 9757 / MK).